Here is a 275-residue protein sequence, read N- to C-terminus: Interleukin-2 receptor subunit alpha (275 aa).

An N-terminal signal peptide occupies residues 1-21; that stretch reads MEPSLLMWRFFVFIVVPGCVT. Sushi domains are found at residues 22 to 81 and 121 to 186; these read EACH…FCNS and GHCE…KCIS. Residues 22 to 243 lie on the Extracellular side of the membrane; it reads EACHDDPPSL…DTFIFTTEYQ (222 aa). 3 disulfides stabilise this stretch: Cys-24–Cys-64, Cys-49–Cys-77, and Cys-51–Cys-79. N-linked (GlcNAc...) asparagine glycosylation occurs at Asn-80. Residues 86–130 are disordered; the sequence is KNPVKPVTPGSEEQRERKPTDAQSQTQPPEQADLPGHCEEPPPWE. Basic and acidic residues predominate over residues 121 to 130; that stretch reads GHCEEPPPWE. Cystine bridges form between Cys-123–Cys-168 and Cys-152–Cys-184. Residues 188-213 are disordered; it reads GANSQAPDEAEPPESTEAPPGSGTFL. The chain crosses the membrane as a helical span at residues 244–262; it reads IAVAGCILLLSSILLLSCL. Topologically, residues 263–275 are cytoplasmic; the sequence is TWQRRWKKNRRTI.

Non-covalent dimer of an alpha and a beta subunit. IL2R exists in 3 different forms: a high affinity dimer, an intermediate affinity monomer (beta subunit), and a low affinity monomer (alpha subunit). The high and intermediate affinity forms also associate with a gamma subunit.

Its subcellular location is the membrane. In terms of biological role, receptor for interleukin-2. The receptor is involved in the regulation of immune tolerance by controlling regulatory T cells (TREGs) activity. TREGs suppress the activation and expansion of autoreactive T-cells. The protein is Interleukin-2 receptor subunit alpha (IL2RA) of Ovis aries (Sheep).